Consider the following 241-residue polypeptide: 1-(5-phosphoribosyl)-5-[(5-phosphoribosylamino)methylideneamino] imidazole-4-carboxamide isomerase (241 aa).

Asp10 functions as the Proton acceptor in the catalytic mechanism. Catalysis depends on Asp131, which acts as the Proton donor.

The protein belongs to the HisA/HisF family.

The protein resides in the cytoplasm. The catalysed reaction is 1-(5-phospho-beta-D-ribosyl)-5-[(5-phospho-beta-D-ribosylamino)methylideneamino]imidazole-4-carboxamide = 5-[(5-phospho-1-deoxy-D-ribulos-1-ylimino)methylamino]-1-(5-phospho-beta-D-ribosyl)imidazole-4-carboxamide. It participates in amino-acid biosynthesis; L-histidine biosynthesis; L-histidine from 5-phospho-alpha-D-ribose 1-diphosphate: step 4/9. This Hyphomonas neptunium (strain ATCC 15444) protein is 1-(5-phosphoribosyl)-5-[(5-phosphoribosylamino)methylideneamino] imidazole-4-carboxamide isomerase.